The chain runs to 168 residues: Crossover junction endodeoxyribonuclease RuvC (168 aa).

Residues Asp11, Glu71, and Asp144 contribute to the active site. Residues Asp11, Glu71, and Asp144 each coordinate Mg(2+).

It belongs to the RuvC family. As to quaternary structure, homodimer which binds Holliday junction (HJ) DNA. The HJ becomes 2-fold symmetrical on binding to RuvC with unstacked arms; it has a different conformation from HJ DNA in complex with RuvA. In the full resolvosome a probable DNA-RuvA(4)-RuvB(12)-RuvC(2) complex forms which resolves the HJ. Mg(2+) serves as cofactor.

The protein localises to the cytoplasm. It catalyses the reaction Endonucleolytic cleavage at a junction such as a reciprocal single-stranded crossover between two homologous DNA duplexes (Holliday junction).. Functionally, the RuvA-RuvB-RuvC complex processes Holliday junction (HJ) DNA during genetic recombination and DNA repair. Endonuclease that resolves HJ intermediates. Cleaves cruciform DNA by making single-stranded nicks across the HJ at symmetrical positions within the homologous arms, yielding a 5'-phosphate and a 3'-hydroxyl group; requires a central core of homology in the junction. The consensus cleavage sequence is 5'-(A/T)TT(C/G)-3'. Cleavage occurs on the 3'-side of the TT dinucleotide at the point of strand exchange. HJ branch migration catalyzed by RuvA-RuvB allows RuvC to scan DNA until it finds its consensus sequence, where it cleaves and resolves the cruciform DNA. This chain is Crossover junction endodeoxyribonuclease RuvC, found in Protochlamydia amoebophila (strain UWE25).